Here is a 559-residue protein sequence, read N- to C-terminus: Alkaline phosphatase PhoK (559 aa).

Positions 1–19 (MLKHVAAALLLATAMPVVA) are cleaved as a signal peptide. Positions 49 and 89 each coordinate Zn(2+). Thr-89 acts as the Phosphothreonine intermediate in catalysis. An intrachain disulfide couples Cys-90 to Cys-126. Substrate-binding positions include Asn-110 and 171–173 (KDR). Cys-231 and Cys-314 are oxidised to a cystine. Zn(2+) is bound by residues Asp-300, His-304, Asp-345, His-346, and His-491. A disulfide bridge links Cys-545 with Cys-556.

In terms of assembly, monomer. The cofactor is Zn(2+).

Its subcellular location is the secreted. The catalysed reaction is a phosphate monoester + H2O = an alcohol + phosphate. Alkaline phosphatase with broad substrate specificity. Precipitates uranium from alkaline solutions. This is Alkaline phosphatase PhoK from Sphingomonas sp.